The primary structure comprises 536 residues: Probable cytochrome P450 520A1 (536 aa).

The helical transmembrane segment at 1-21 (MEILTFIIYLITFFILFDFYK) threads the bilayer. C479 serves as a coordination point for heme.

It belongs to the cytochrome P450 family. The cofactor is heme.

It is found in the membrane. This chain is Probable cytochrome P450 520A1 (cyp520A1), found in Dictyostelium discoideum (Social amoeba).